A 208-amino-acid chain; its full sequence is Uracil phosphoribosyltransferase (208 aa).

Residues Arg-78, Arg-103, and 130-138 contribute to the 5-phospho-alpha-D-ribose 1-diphosphate site; that span reads DPMLATGGS. Residues Ile-193 and 198–200 each bind uracil; that span reads GDA. Residue Asp-199 coordinates 5-phospho-alpha-D-ribose 1-diphosphate.

Belongs to the UPRTase family. It depends on Mg(2+) as a cofactor.

The enzyme catalyses UMP + diphosphate = 5-phospho-alpha-D-ribose 1-diphosphate + uracil. Its pathway is pyrimidine metabolism; UMP biosynthesis via salvage pathway; UMP from uracil: step 1/1. Allosterically activated by GTP. In terms of biological role, catalyzes the conversion of uracil and 5-phospho-alpha-D-ribose 1-diphosphate (PRPP) to UMP and diphosphate. This chain is Uracil phosphoribosyltransferase, found in Klebsiella pneumoniae (strain 342).